Reading from the N-terminus, the 257-residue chain is Imidazole glycerol phosphate synthase subunit HisF (257 aa).

Active-site residues include Asp-11 and Asp-130.

This sequence belongs to the HisA/HisF family. As to quaternary structure, heterodimer of HisH and HisF.

Its subcellular location is the cytoplasm. It catalyses the reaction 5-[(5-phospho-1-deoxy-D-ribulos-1-ylimino)methylamino]-1-(5-phospho-beta-D-ribosyl)imidazole-4-carboxamide + L-glutamine = D-erythro-1-(imidazol-4-yl)glycerol 3-phosphate + 5-amino-1-(5-phospho-beta-D-ribosyl)imidazole-4-carboxamide + L-glutamate + H(+). It functions in the pathway amino-acid biosynthesis; L-histidine biosynthesis; L-histidine from 5-phospho-alpha-D-ribose 1-diphosphate: step 5/9. IGPS catalyzes the conversion of PRFAR and glutamine to IGP, AICAR and glutamate. The HisF subunit catalyzes the cyclization activity that produces IGP and AICAR from PRFAR using the ammonia provided by the HisH subunit. This chain is Imidazole glycerol phosphate synthase subunit HisF, found in Shewanella sp. (strain MR-7).